The following is a 447-amino-acid chain: Tubulin alpha-1 chain (447 aa).

8 residues coordinate GTP: Gln-11, Glu-72, Ser-141, Gly-145, Thr-146, Thr-180, Asn-207, and Asn-229. Glu-72 serves as a coordination point for Mg(2+). Residue Glu-255 is part of the active site.

This sequence belongs to the tubulin family. Dimer of alpha and beta chains. A typical microtubule is a hollow water-filled tube with an outer diameter of 25 nm and an inner diameter of 15 nM. Alpha-beta heterodimers associate head-to-tail to form protofilaments running lengthwise along the microtubule wall with the beta-tubulin subunit facing the microtubule plus end conferring a structural polarity. Microtubules usually have 13 protofilaments but different protofilament numbers can be found in some organisms and specialized cells. Mg(2+) serves as cofactor.

The protein localises to the cytoplasm. It is found in the cytoskeleton. The catalysed reaction is GTP + H2O = GDP + phosphate + H(+). In terms of biological role, tubulin is the major constituent of microtubules, a cylinder consisting of laterally associated linear protofilaments composed of alpha- and beta-tubulin heterodimers. Microtubules grow by the addition of GTP-tubulin dimers to the microtubule end, where a stabilizing cap forms. Below the cap, tubulin dimers are in GDP-bound state, owing to GTPase activity of alpha-tubulin. This chain is Tubulin alpha-1 chain (TUB1), found in Saccharomyces cerevisiae (strain ATCC 204508 / S288c) (Baker's yeast).